Here is a 227-residue protein sequence, read N- to C-terminus: Uridylate kinase (227 aa).

6 to 10 provides a ligand contact to ATP; the sequence is KVSGK. Gly43 serves as a coordination point for UMP. 2 residues coordinate ATP: Gly44 and Arg48. UMP contacts are provided by residues Asp65 and 113-119; that span reads FQPGQST. Thr139, Asn140, Tyr145, and Asp148 together coordinate ATP.

The protein belongs to the UMP kinase family. In terms of assembly, homohexamer.

Its subcellular location is the cytoplasm. The catalysed reaction is UMP + ATP = UDP + ADP. Its pathway is pyrimidine metabolism; CTP biosynthesis via de novo pathway; UDP from UMP (UMPK route): step 1/1. Its activity is regulated as follows. Inhibited by UTP. Its function is as follows. Catalyzes the reversible phosphorylation of UMP to UDP. The protein is Uridylate kinase of Sulfolobus acidocaldarius (strain ATCC 33909 / DSM 639 / JCM 8929 / NBRC 15157 / NCIMB 11770).